Here is a 299-residue protein sequence, read N- to C-terminus: MKRPDYRALQALDAVIRERGFERAAQKLCITQSAVSQRIKQLENLFGQPLLVRTVPPQPTEQGQKLLALLHQVEMLEEQWLGDENSGSTPLLLSLAVNADSLATWLLPALHPVLTQLPIRLNIQVEDETRTQERLRRGEVVGAISIQPQALPSCLVDQLGALDYLFVASPDFAQRYFANGVTKSSLLKAPAVAFDHLDDMHQAFLQQNFGLSPGSVPCHIVNSSEAFVQLAKQGSTCCMIPHLQIADELKSGELIDLTPGLCQRRMLYWHRFAPESRTMRKVTDALLDYGRKVLKQDEE.

The HTH lysR-type domain occupies 4–60 (PDYRALQALDAVIRERGFERAAQKLCITQSAVSQRIKQLENLFGQPLLVRTVPPQPT). The H-T-H motif DNA-binding region spans 21–40 (FERAAQKLCITQSAVSQRIK).

This sequence belongs to the LysR transcriptional regulatory family. As to quaternary structure, homodimer.

Controls the transcription of genes involved in arginine and lysine metabolism. In Proteus mirabilis (strain HI4320), this protein is HTH-type transcriptional regulator ArgP.